A 91-amino-acid polypeptide reads, in one-letter code: Acylphosphatase (91 aa).

An Acylphosphatase-like domain is found at 5–91 (WKKWNVRGVV…QEYKDFHVEF (87 aa)). Residues R20 and N38 contribute to the active site.

This sequence belongs to the acylphosphatase family.

It carries out the reaction an acyl phosphate + H2O = a carboxylate + phosphate + H(+). The sequence is that of Acylphosphatase (acyP) from Fervidobacterium nodosum (strain ATCC 35602 / DSM 5306 / Rt17-B1).